The following is a 490-amino-acid chain: N-succinylglutamate 5-semialdehyde dehydrogenase (490 aa).

An NAD(+)-binding site is contributed by 223–228 (GSAGTG). Active-site residues include Glu-246 and Cys-280.

Belongs to the aldehyde dehydrogenase family. AstD subfamily.

It catalyses the reaction N-succinyl-L-glutamate 5-semialdehyde + NAD(+) + H2O = N-succinyl-L-glutamate + NADH + 2 H(+). It functions in the pathway amino-acid degradation; L-arginine degradation via AST pathway; L-glutamate and succinate from L-arginine: step 4/5. In terms of biological role, catalyzes the NAD-dependent reduction of succinylglutamate semialdehyde into succinylglutamate. The polypeptide is N-succinylglutamate 5-semialdehyde dehydrogenase (Serratia proteamaculans (strain 568)).